The primary structure comprises 214 residues: Protein-L-isoaspartate O-methyltransferase (214 aa).

The active site involves Ser63.

Belongs to the methyltransferase superfamily. L-isoaspartyl/D-aspartyl protein methyltransferase family.

It localises to the cytoplasm. It catalyses the reaction [protein]-L-isoaspartate + S-adenosyl-L-methionine = [protein]-L-isoaspartate alpha-methyl ester + S-adenosyl-L-homocysteine. In terms of biological role, catalyzes the methyl esterification of L-isoaspartyl residues in peptides and proteins that result from spontaneous decomposition of normal L-aspartyl and L-asparaginyl residues. It plays a role in the repair and/or degradation of damaged proteins. This is Protein-L-isoaspartate O-methyltransferase from Desulfotalea psychrophila (strain LSv54 / DSM 12343).